Here is a 364-residue protein sequence, read N- to C-terminus: Mannose-1-phosphate guanyltransferase (364 aa).

The protein belongs to the transferase hexapeptide repeat family.

The protein localises to the cytoplasm. It catalyses the reaction alpha-D-mannose 1-phosphate + GTP + H(+) = GDP-alpha-D-mannose + diphosphate. Its pathway is nucleotide-sugar biosynthesis; GDP-alpha-D-mannose biosynthesis; GDP-alpha-D-mannose from alpha-D-mannose 1-phosphate (GTP route): step 1/1. Functionally, involved in cell wall synthesis where it is required for glycosylation. Involved in cell cycle progression through cell-size checkpoint. In Hypocrea jecorina (Trichoderma reesei), this protein is Mannose-1-phosphate guanyltransferase (mpg1).